The sequence spans 457 residues: Bifunctional protein GlmU (457 aa).

Positions 1-230 are pyrophosphorylase; that stretch reads MLNVVILAAG…SWETLGVNSR (230 aa). Residues 7 to 10, lysine 21, glutamine 73, 78 to 79, 104 to 106, glycine 140, glutamate 155, asparagine 170, and asparagine 228 each bind UDP-N-acetyl-alpha-D-glucosamine; these read LAAG, GT, and YGD. Aspartate 106 serves as a coordination point for Mg(2+). Asparagine 228 serves as a coordination point for Mg(2+). The segment at 231 to 251 is linker; sequence VQQAQLERAWQSELARRQLEA. Residues 252–457 are N-acetyltransferase; it reads GVTLADPARF…EGWKRPVKKS (206 aa). UDP-N-acetyl-alpha-D-glucosamine is bound by residues arginine 334 and lysine 352. The Proton acceptor role is filled by histidine 364. Positions 367 and 378 each coordinate UDP-N-acetyl-alpha-D-glucosamine. Residues alanine 381, 387 to 388, serine 406, alanine 424, and arginine 441 contribute to the acetyl-CoA site; that span reads NY.

It in the N-terminal section; belongs to the N-acetylglucosamine-1-phosphate uridyltransferase family. This sequence in the C-terminal section; belongs to the transferase hexapeptide repeat family. Homotrimer. The cofactor is Mg(2+).

Its subcellular location is the cytoplasm. The catalysed reaction is alpha-D-glucosamine 1-phosphate + acetyl-CoA = N-acetyl-alpha-D-glucosamine 1-phosphate + CoA + H(+). It catalyses the reaction N-acetyl-alpha-D-glucosamine 1-phosphate + UTP + H(+) = UDP-N-acetyl-alpha-D-glucosamine + diphosphate. It participates in nucleotide-sugar biosynthesis; UDP-N-acetyl-alpha-D-glucosamine biosynthesis; N-acetyl-alpha-D-glucosamine 1-phosphate from alpha-D-glucosamine 6-phosphate (route II): step 2/2. Its pathway is nucleotide-sugar biosynthesis; UDP-N-acetyl-alpha-D-glucosamine biosynthesis; UDP-N-acetyl-alpha-D-glucosamine from N-acetyl-alpha-D-glucosamine 1-phosphate: step 1/1. It functions in the pathway bacterial outer membrane biogenesis; LPS lipid A biosynthesis. Catalyzes the last two sequential reactions in the de novo biosynthetic pathway for UDP-N-acetylglucosamine (UDP-GlcNAc). The C-terminal domain catalyzes the transfer of acetyl group from acetyl coenzyme A to glucosamine-1-phosphate (GlcN-1-P) to produce N-acetylglucosamine-1-phosphate (GlcNAc-1-P), which is converted into UDP-GlcNAc by the transfer of uridine 5-monophosphate (from uridine 5-triphosphate), a reaction catalyzed by the N-terminal domain. The chain is Bifunctional protein GlmU from Bordetella bronchiseptica (strain ATCC BAA-588 / NCTC 13252 / RB50) (Alcaligenes bronchisepticus).